A 429-amino-acid chain; its full sequence is Glutamate-1-semialdehyde 2,1-aminomutase 1 (429 aa).

Lys-268 bears the N6-(pyridoxal phosphate)lysine mark.

It belongs to the class-III pyridoxal-phosphate-dependent aminotransferase family. HemL subfamily. In terms of assembly, homodimer. Pyridoxal 5'-phosphate is required as a cofactor.

Its subcellular location is the cytoplasm. It carries out the reaction (S)-4-amino-5-oxopentanoate = 5-aminolevulinate. The protein operates within porphyrin-containing compound metabolism; protoporphyrin-IX biosynthesis; 5-aminolevulinate from L-glutamyl-tRNA(Glu): step 2/2. The protein is Glutamate-1-semialdehyde 2,1-aminomutase 1 of Lysinibacillus sphaericus (strain C3-41).